We begin with the raw amino-acid sequence, 265 residues long: Tryptophan synthase alpha chain (265 aa).

Residues Glu-48 and Asp-59 each act as proton acceptor in the active site.

The protein belongs to the TrpA family. As to quaternary structure, tetramer of two alpha and two beta chains.

It carries out the reaction (1S,2R)-1-C-(indol-3-yl)glycerol 3-phosphate + L-serine = D-glyceraldehyde 3-phosphate + L-tryptophan + H2O. Its pathway is amino-acid biosynthesis; L-tryptophan biosynthesis; L-tryptophan from chorismate: step 5/5. Functionally, the alpha subunit is responsible for the aldol cleavage of indoleglycerol phosphate to indole and glyceraldehyde 3-phosphate. This Vesicomyosocius okutanii subsp. Calyptogena okutanii (strain HA) protein is Tryptophan synthase alpha chain.